The following is a 576-amino-acid chain: Arginine--tRNA ligase (576 aa).

A 'HIGH' region motif is present at residues 132–142 (ANPTGPMHIGH).

The protein belongs to the class-I aminoacyl-tRNA synthetase family. In terms of assembly, monomer.

The protein resides in the cytoplasm. The catalysed reaction is tRNA(Arg) + L-arginine + ATP = L-arginyl-tRNA(Arg) + AMP + diphosphate. The protein is Arginine--tRNA ligase of Ehrlichia chaffeensis (strain ATCC CRL-10679 / Arkansas).